The primary structure comprises 301 residues: Acetylglutamate kinase (301 aa).

Residues 68–69 (GG), Arg-90, and Asn-195 each bind substrate.

The protein belongs to the acetylglutamate kinase family. ArgB subfamily.

It localises to the cytoplasm. It catalyses the reaction N-acetyl-L-glutamate + ATP = N-acetyl-L-glutamyl 5-phosphate + ADP. Its pathway is amino-acid biosynthesis; L-arginine biosynthesis; N(2)-acetyl-L-ornithine from L-glutamate: step 2/4. Its function is as follows. Catalyzes the ATP-dependent phosphorylation of N-acetyl-L-glutamate. The polypeptide is Acetylglutamate kinase (Ectopseudomonas mendocina (strain ymp) (Pseudomonas mendocina)).